Here is a 74-residue protein sequence, read N- to C-terminus: ATP synthase subunit 9, mitochondrial (74 aa).

2 helical membrane passes run 16 to 36 and 50 to 70; these read GLIG…LGVA and ILGF…AFLL.

This sequence belongs to the ATPase C chain family. In terms of assembly, F-type ATPases have 2 components, CF(1) - the catalytic core - and CF(0) - the membrane proton channel. CF(1) has five subunits: alpha(3), beta(3), gamma(1), delta(1), epsilon(1). CF(0) has three main subunits: a, b and c.

Its subcellular location is the mitochondrion membrane. Functionally, mitochondrial membrane ATP synthase (F(1)F(0) ATP synthase or Complex V) produces ATP from ADP in the presence of a proton gradient across the membrane which is generated by electron transport complexes of the respiratory chain. F-type ATPases consist of two structural domains, F(1) - containing the extramembraneous catalytic core and F(0) - containing the membrane proton channel, linked together by a central stalk and a peripheral stalk. During catalysis, ATP synthesis in the catalytic domain of F(1) is coupled via a rotary mechanism of the central stalk subunits to proton translocation. Part of the complex F(0) domain. A homomeric c-ring of probably 10 subunits is part of the complex rotary element. This is ATP synthase subunit 9, mitochondrial (ATP9) from Trichophyton rubrum (Athlete's foot fungus).